We begin with the raw amino-acid sequence, 257 residues long: Putative phosphatase YkrA (257 aa).

Asp-9 serves as the catalytic Nucleophile. Residue Asp-9 participates in Mg(2+) binding. Ile-10 contributes to the phosphate binding site. Asp-11 contributes to the Mg(2+) binding site. Phosphate-binding positions include 43–44 (SG) and Lys-183. Asp-206 contacts Mg(2+). Asn-209 provides a ligand contact to phosphate.

It belongs to the HAD-like hydrolase superfamily. Cof family. The cofactor is Mg(2+).

The polypeptide is Putative phosphatase YkrA (ykrA) (Bacillus subtilis (strain 168)).